A 675-amino-acid chain; its full sequence is UvrABC system protein B (675 aa).

Residues 32–417 (EGLSDGLAYQ…EHAGQVVEQV (386 aa)) form the Helicase ATP-binding domain. 45–52 (GVTGSGKT) contacts ATP. Residues 98–121 (YYDYYQPEAYVPSRDLFIEKDSAI) carry the Beta-hairpin motif. One can recognise a Helicase C-terminal domain in the interval 436–602 (QVDDLMSEIN…QIKKQVKDII (167 aa)). The 36-residue stretch at 634–669 (IKEIAKLEKAMQQAARDLQFEEAAVLRDRISNIKEN) folds into the UVR domain.

This sequence belongs to the UvrB family. Forms a heterotetramer with UvrA during the search for lesions. Interacts with UvrC in an incision complex.

It is found in the cytoplasm. Functionally, the UvrABC repair system catalyzes the recognition and processing of DNA lesions. A damage recognition complex composed of 2 UvrA and 2 UvrB subunits scans DNA for abnormalities. Upon binding of the UvrA(2)B(2) complex to a putative damaged site, the DNA wraps around one UvrB monomer. DNA wrap is dependent on ATP binding by UvrB and probably causes local melting of the DNA helix, facilitating insertion of UvrB beta-hairpin between the DNA strands. Then UvrB probes one DNA strand for the presence of a lesion. If a lesion is found the UvrA subunits dissociate and the UvrB-DNA preincision complex is formed. This complex is subsequently bound by UvrC and the second UvrB is released. If no lesion is found, the DNA wraps around the other UvrB subunit that will check the other stand for damage. In Neisseria gonorrhoeae (strain ATCC 700825 / FA 1090), this protein is UvrABC system protein B.